We begin with the raw amino-acid sequence, 184 residues long: CASP-like protein 1U2 (184 aa).

The Cytoplasmic segment spans residues 1-16; sequence MSYGCQVSDDEPNGSK. A helical membrane pass occupies residues 17-37; sequence AVSLLLRLSTLALALTSAVVM. The Extracellular portion of the chain corresponds to 38–62; the sequence is ATASECTVVQLNGVVATITYKDFPP. The chain crosses the membrane as a helical span at residues 63–83; it reads FVYLVGFNIAAAMLEAAAIYL. The Cytoplasmic portion of the chain corresponds to 84–100; that stretch reads RLSTGGGDDDDEGFKGK. The helical transmembrane segment at 101–121 threads the bilayer; sequence LPGILLVVIDVAVQALVYTAT. Residues 122-153 are Extracellular-facing; the sequence is GGAFAAVSAYGPQINACGAGAGRFCGQVHQSK. The helical transmembrane segment at 154–174 threads the bilayer; the sequence is LLSFAGSAAVGLAVVFRDVSL. The Cytoplasmic segment spans residues 175–184; it reads PFSLWPTSSD.

Belongs to the Casparian strip membrane proteins (CASP) family. In terms of assembly, homodimer and heterodimers.

Its subcellular location is the cell membrane. The protein is CASP-like protein 1U2 of Oryza sativa subsp. japonica (Rice).